A 481-amino-acid chain; its full sequence is MSVRVRIAPSPTGNLHIGTARTAVFNWLFARRHQGQFILRIEDTDLERSRSEYTDNILTGLQWLGLNWDEGPFYQTQRLDLYKAAVQQLLDSGKAYRCYCTEAELEALRESQRARNEAPRYDNRHRDLTPEQEAAFQAEGREAVIRFRIDDDREIAWTDLVRDRVVWKGSDLGGDMVIARRSPAGTIGQPLYNLAVVVDDIDMTISHVIRGEDHIANTAKQILLYEALGAAVPEFAHTPLILNKEGRKLSKRDGVTSISDFQNLGYLPEAIANYMTLLGWSPVEGMDERFSLAEAATVFDFDRVNKAGAKFDWDKLNWLNSQVIKEKSASELVALLQPFWSKAGVDTAAYPAAWLEELATLLGPSLVTLTDIVGQSQLFFSQGIELQEDAIAQLGQAGSKAVLQQILEALPSEALTLEVAKGLIDQAVKAAGVKKGIGMRSLRAALMGSMQGPDLLTSWVLLHQAGQAQPRLQAAIAAAQG.

The 'HIGH' region motif lies at 9 to 19 (PSPTGNLHIGT). The Zn(2+) site is built by Cys98, Cys100, His125, and Asp127. The 'KMSKS' region signature appears at 248–252 (KLSKR). Lys251 serves as a coordination point for ATP.

It belongs to the class-I aminoacyl-tRNA synthetase family. Glutamate--tRNA ligase type 1 subfamily. In terms of assembly, monomer. The cofactor is Zn(2+).

The protein resides in the cytoplasm. The enzyme catalyses tRNA(Glu) + L-glutamate + ATP = L-glutamyl-tRNA(Glu) + AMP + diphosphate. Functionally, catalyzes the attachment of glutamate to tRNA(Glu) in a two-step reaction: glutamate is first activated by ATP to form Glu-AMP and then transferred to the acceptor end of tRNA(Glu). The protein is Glutamate--tRNA ligase of Synechococcus elongatus (strain ATCC 33912 / PCC 7942 / FACHB-805) (Anacystis nidulans R2).